The following is a 1014-amino-acid chain: Calcium-transporting ATPase 2, plasma membrane-type (1014 aa).

Residue Met1 is modified to N-acetylmethionine. The Cytoplasmic segment spans residues 1-160 (MESYLNENFD…NKFAESEMRG (160 aa)). Residues 20–31 (VLEKWRNLCGVV) are interaction with calmodulin. Ser45 is subject to Phosphoserine; by CPK1. A helical membrane pass occupies residues 161–181 (FWVFVWEALQDMTLMILGVCA). The Lumenal portion of the chain corresponds to 182-199 (FVSLIVGIATEGWPKGSH). A helical membrane pass occupies residues 200–220 (DGLGIAASILLVVFVTATSDY). Topologically, residues 221–348 (RQSLQFRDLD…DDETPLQVKL (128 aa)) are cytoplasmic. A helical membrane pass occupies residues 349–368 (NGVATIIGKIGLFFAVVTFA). Residues 369–398 (VLVQGMFMRKLSTGTHWVWSGDEALELLEY) are Lumenal-facing. A helical membrane pass occupies residues 399 to 416 (FAIAVTIVVVAVPEGLPL). At 417–810 (AVTLSLAFAM…KWGRSVYINI (394 aa)) the chain is on the cytoplasmic side. Catalysis depends on Asp454, which acts as the 4-aspartylphosphate intermediate. Positions 755 and 759 each coordinate Mg(2+). A helical membrane pass occupies residues 811–829 (QKFVQFQLTVNVVALVVNF). Residues 830 to 840 (SSACLTGSAPL) are Lumenal-facing. The chain crosses the membrane as a helical span at residues 841–861 (TAVQLLWVNMIMDTLGALALA). The Cytoplasmic portion of the chain corresponds to 862-881 (TEPPNDELMKRLPVGRRGNF). Residues 882–904 (ITNAMWRNILGQAVYQFIVIWIL) traverse the membrane as a helical segment. Topologically, residues 905-916 (QAKGKAMFGLDG) are lumenal. A helical membrane pass occupies residues 917-938 (PDSTLMLNTLIFNCFVFCQVFN). The Cytoplasmic segment spans residues 939 to 956 (EISSREMEEIDVFKGILD). A helical membrane pass occupies residues 957 to 978 (NYVFVVVIGATVFFQIIIIEFL). Topologically, residues 979–988 (GTFASTTPLT) are lumenal. A helical transmembrane segment spans residues 989-1010 (ITQWIFSIFIGFLGMPIAAGLK). The Cytoplasmic segment spans residues 1011–1014 (TIPV).

This sequence belongs to the cation transport ATPase (P-type) (TC 3.A.3) family. Type IIB subfamily.

It is found in the endoplasmic reticulum membrane. The enzyme catalyses Ca(2+)(in) + ATP + H2O = Ca(2+)(out) + ADP + phosphate + H(+). Its activity is regulated as follows. Activated by calmodulin. Its function is as follows. This magnesium-dependent enzyme catalyzes the hydrolysis of ATP coupled with the translocation of calcium from the cytosol into the endoplasmic reticulum. In Arabidopsis thaliana (Mouse-ear cress), this protein is Calcium-transporting ATPase 2, plasma membrane-type (ACA2).